The sequence spans 288 residues: Light-independent protochlorophyllide reductase iron-sulfur ATP-binding protein (288 aa).

ATP-binding positions include 10 to 15 (GIGKST) and K39. Position 14 (S14) interacts with Mg(2+). [4Fe-4S] cluster-binding residues include C95 and C129. 180 to 181 (NR) is an ATP binding site.

It belongs to the NifH/BchL/ChlL family. In terms of assembly, homodimer. Protochlorophyllide reductase is composed of three subunits; ChlL, ChlN and ChlB. It depends on [4Fe-4S] cluster as a cofactor.

It catalyses the reaction chlorophyllide a + oxidized 2[4Fe-4S]-[ferredoxin] + 2 ADP + 2 phosphate = protochlorophyllide a + reduced 2[4Fe-4S]-[ferredoxin] + 2 ATP + 2 H2O. It participates in porphyrin-containing compound metabolism; chlorophyll biosynthesis (light-independent). Its function is as follows. Component of the dark-operative protochlorophyllide reductase (DPOR) that uses Mg-ATP and reduced ferredoxin to reduce ring D of protochlorophyllide (Pchlide) to form chlorophyllide a (Chlide). This reaction is light-independent. The L component serves as a unique electron donor to the NB-component of the complex, and binds Mg-ATP. The chain is Light-independent protochlorophyllide reductase iron-sulfur ATP-binding protein from Nostoc punctiforme (strain ATCC 29133 / PCC 73102).